The following is an 804-amino-acid chain: Leucine--tRNA ligase (804 aa).

The 'HIGH' region signature appears at 39 to 50 (PFPSGKGLHVGH). Positions 573–577 (KMSKS) match the 'KMSKS' region motif. K576 contacts ATP.

The protein belongs to the class-I aminoacyl-tRNA synthetase family.

It localises to the cytoplasm. The enzyme catalyses tRNA(Leu) + L-leucine + ATP = L-leucyl-tRNA(Leu) + AMP + diphosphate. The polypeptide is Leucine--tRNA ligase (Lactobacillus helveticus (strain DPC 4571)).